A 460-amino-acid chain; its full sequence is Benzyl alcohol O-benzoyltransferase (460 aa).

Residues His-167 and Asp-382 each act as proton acceptor in the active site.

Belongs to the plant acyltransferase family. Specifically expressed in flowers, mainly in the limb of flowers corollas, and, at low levels, in roots, stems, sepals and leaves.

It catalyses the reaction benzyl alcohol + benzoyl-CoA = benzyl benzoate + CoA. It carries out the reaction benzyl alcohol + acetyl-CoA = benzyl acetate + CoA. The enzyme catalyses 3-hydroxybenzyl alcohol + acetyl-CoA = 3-hydroxy-benzyl acetate + CoA. The catalysed reaction is 3-hydroxybenzyl alcohol + benzoyl-CoA = 3-hydroxy-benzyl benzoate + CoA. It catalyses the reaction 2-phenylethanol + benzoyl-CoA = phenethyl benzoate + CoA. It carries out the reaction (3Z)-hex-3-en-1-ol + benzoyl-CoA = (3Z)-hex-3-en-1-yl benzoate + CoA. The enzyme catalyses (2E)-geraniol + acetyl-CoA = (2E)-geranyl acetate + CoA. The catalysed reaction is butan-1-ol + benzoyl-CoA = butyl benzoate + CoA. It catalyses the reaction (2E)-geraniol + benzoyl-CoA = (2E)-geranyl benzoate + CoA. It carries out the reaction octan-1-ol + benzoyl-CoA = octyl benzoate + CoA. Its pathway is aromatic compound metabolism; benzoyl-CoA degradation. Involved in the production of volatile organic compounds (VOCs), including floral volatile benzenoids and phenylpropanoids (FVBP), in flowers of fragrant cultivars (e.g. cv. Mitchell and cv. V26), scent attracting pollinators (e.g. the night-active hawkmoth pollinator Manduca sexta). Acyltransferase that catalyzes the transfer of benzoyl and acetyl moieties to a large variety of potential substrate alcohols, and involved in the formation of volatile esters benzyl benzoate and phenylethyl benzoate from benzoyl-CoA. With acetyl-CoA, mainly active on benzyl alcohol, and, to a lower extent, on 3-hydroxybenzyl alcohol, geraniol, and 2-phenylethanol, but barely active on butanol, 1-octanol, 4-hydroxy-benzyl alcohol, 2-hexanol, cis-3-hexen-1-ol and linalool. With benzoyl-CoA, mainly active on benzyl alcohol, but also efficient on several substrates, including 3-hydroxybenzyl alcohol, 2-phenylethanol, geraniol, butanol, cis-3-hexen-1-ol and 1-octanol. This Petunia hybrida (Petunia) protein is Benzyl alcohol O-benzoyltransferase.